Consider the following 40-residue polypeptide: Dolichyl-diphosphooligosaccharide--protein glycosyltransferase subunit 4 (40 aa).

The Lumenal segment spans residues 1-7; sequence MITDMQL. The helical transmembrane segment at 8–28 threads the bilayer; it reads AIFSNVLGVFLFLLVVAYHYI. The Cytoplasmic portion of the chain corresponds to 29-40; it reads NANTGKPSAKAK.

It belongs to the OST4 family. In terms of assembly, component of the oligosaccharyltransferase (OST) complex.

The protein resides in the endoplasmic reticulum membrane. In terms of biological role, subunit of the oligosaccharyl transferase (OST) complex that catalyzes the initial transfer of a defined glycan (Glc(3)Man(9)GlcNAc(2) in eukaryotes) from the lipid carrier dolichol-pyrophosphate to an asparagine residue within an Asn-X-Ser/Thr consensus motif in nascent polypeptide chains, the first step in protein N-glycosylation. N-glycosylation occurs cotranslationally and the complex associates with the Sec61 complex at the channel-forming translocon complex that mediates protein translocation across the endoplasmic reticulum (ER). All subunits are required for a maximal enzyme activity. The polypeptide is Dolichyl-diphosphooligosaccharide--protein glycosyltransferase subunit 4 (Drosophila sechellia (Fruit fly)).